The primary structure comprises 457 residues: Methylphosphonate synthase (457 aa).

The region spanning 23 to 74 (ILNDIKRRPEDAANELGVSIEEINSIISGKQKISPSLIEKAVNIWPVNERDF) is the HTH cro/C1-type 1 domain. The H-T-H motif DNA-binding region spans 32 to 50 (EDAANELGVSIEEINSIIS). Residues His148 and His190 each contribute to the Fe cation site. One can recognise an HTH cro/C1-type 2 domain in the interval 247–301 (LEYYFELSNLTKEKFAKRTNFSMETLADFFTKKKLPTFDELKIIAKALNVNSRDL). Positions 258–277 (KEKFAKRTNFSMETLADFFT) form a DNA-binding region, H-T-H motif.

It belongs to the non-heme iron-dependent dioxygenase family. The cofactor is Fe(2+).

The catalysed reaction is 2-hydroxyethylphosphonate + O2 = methylphosphonate + hydrogencarbonate + H(+). It functions in the pathway phosphorus metabolism; phosphonate biosynthesis. In terms of biological role, catalyzes the conversion of 2-hydroxyethylphosphonate into methylphosphonate in the methylphosphonate biosynthesis pathway. The polypeptide is Methylphosphonate synthase (mpnS) (Nitrosopumilus maritimus (strain SCM1)).